The primary structure comprises 158 residues: Large ribosomal subunit protein uL11 (158 aa).

Belongs to the universal ribosomal protein uL11 family. In terms of assembly, part of the ribosomal stalk of the 50S ribosomal subunit. Interacts with L10 and the large rRNA to form the base of the stalk. L10 forms an elongated spine to which L12 dimers bind in a sequential fashion forming a multimeric L10(L12)X complex.

Functionally, forms part of the ribosomal stalk which helps the ribosome interact with GTP-bound translation factors. The protein is Large ribosomal subunit protein uL11 of Methanospirillum hungatei JF-1 (strain ATCC 27890 / DSM 864 / NBRC 100397 / JF-1).